The sequence spans 308 residues: MSITGMDSSHVTESQGTLLFNEPLAEYTTWRVGGPAARLYKPANIDDLALFLSRLPFDEPLLWLGLGSNSLIRDGGFSGTVILTQGCLKEMTLLSDNCIRVEAGVSCASMARFSARNNLSGGEFWAGIPGTMGGALRMNAGCHGGETWQSVIEVQTINRRGEIRTRKPEEFEVAYRHVAGLGDEWFISAKLQLSPGNKETSLQLIKDLLAHRAKTQPTNEYNCGSVFRNPPGDFAARLIESCGLKGVSIGGAVVSEKHANFIINHQGTATAANIEALIHLVQTKVREQTSIELIREVHIIGDANVQTR.

In terms of domain architecture, FAD-binding PCMH-type spans 32–196 (VGGPAARLYK…ISAKLQLSPG (165 aa)). Residue arginine 176 is part of the active site. The active-site Proton donor is serine 225. Glutamate 296 is an active-site residue.

The protein belongs to the MurB family. It depends on FAD as a cofactor.

It localises to the cytoplasm. It carries out the reaction UDP-N-acetyl-alpha-D-muramate + NADP(+) = UDP-N-acetyl-3-O-(1-carboxyvinyl)-alpha-D-glucosamine + NADPH + H(+). It participates in cell wall biogenesis; peptidoglycan biosynthesis. Functionally, cell wall formation. In Legionella pneumophila subsp. pneumophila (strain Philadelphia 1 / ATCC 33152 / DSM 7513), this protein is UDP-N-acetylenolpyruvoylglucosamine reductase.